A 271-amino-acid chain; its full sequence is L-aspartate dehydrogenase (271 aa).

Alanine 124 and asparagine 192 together coordinate NAD(+). The active site involves histidine 222.

It belongs to the L-aspartate dehydrogenase family.

The enzyme catalyses L-aspartate + NADP(+) + H2O = oxaloacetate + NH4(+) + NADPH + H(+). The catalysed reaction is L-aspartate + NAD(+) + H2O = oxaloacetate + NH4(+) + NADH + H(+). Its pathway is cofactor biosynthesis; NAD(+) biosynthesis; iminoaspartate from L-aspartate (dehydrogenase route): step 1/1. Specifically catalyzes the NAD or NADP-dependent dehydrogenation of L-aspartate to iminoaspartate. In Methanosarcina mazei (strain ATCC BAA-159 / DSM 3647 / Goe1 / Go1 / JCM 11833 / OCM 88) (Methanosarcina frisia), this protein is L-aspartate dehydrogenase.